A 618-amino-acid chain; its full sequence is Uptake hydrogenase large subunit (618 aa).

Positions 75, 78, 597, and 600 each coordinate Ni(2+).

It belongs to the [NiFe]/[NiFeSe] hydrogenase large subunit family. As to quaternary structure, heterodimer of a large and a small subunit. Ni(2+) serves as cofactor.

Its subcellular location is the cell membrane. The enzyme catalyses H2 + A = AH2. Its function is as follows. This enzyme recycles the H(2) produced by nitrogenase to increase the production of ATP and to protect nitrogenase against inhibition or damage by O(2) under carbon- or phosphate-limited conditions. The sequence is that of Uptake hydrogenase large subunit (hupB) from Rubrivivax gelatinosus (Rhodocyclus gelatinosus).